Here is a 145-residue protein sequence, read N- to C-terminus: Angiogenin-3 (145 aa).

An N-terminal signal peptide occupies residues M1–A24. Position 25 is a pyrrolidone carboxylic acid (Q25). The Proton acceptor role is filled by H37. 3 cysteine pairs are disulfide-bonded: C50-C104, C63-C115, and C81-C130. Positions K55–L59 match the Nucleolar localization signal motif. E65 and H106 together coordinate Zn(2+). H137 serves as the catalytic Proton donor.

Belongs to the pancreatic ribonuclease family.

Its subcellular location is the cytoplasmic vesicle. It localises to the secretory vesicle lumen. The protein resides in the secreted. The protein localises to the nucleus. It is found in the nucleolus. With respect to regulation, divalent metal ions, such as Cu2+ and Zn2+, may inhibit the ribonucleolytic activity. In terms of biological role, has low ribonuclease activity (in vitro). The protein is Angiogenin-3 (Ang3) of Mus musculus (Mouse).